The following is a 636-amino-acid chain: MPRETSLVTIIGEDSYKKLRSSRCLLVGAGGIGSELLKDIILMEFGEIHIVDLDTIDLSNLNRQFLFRQKDIKQPKSTTAVKAVQHFNNSKLVPYQGNVMDISTFPLHWFEQFDIIFNALDNLAARRYVNKISQFLSLPLIESGTAGFDGYMQPIIPGKTECFECTKKETPKTFPVCTIRSTPSQPIHCIVWAKNFLFNQLFASETSGNEDDNNQDWGTDDAEEIKRIKQETNELYELQKIIISRDASRIPEILNKLFIQDINKLLAIENLWKTRTKPVPLSDSQINTPTKTAQSASNSVGTIQEQISNFINITQKLMDRYPKEQNHIEFDKDDADTLEFVATAANIRSHIFNIPMKSVFDIKQIAGNIIPAIATTNAIVAGASSLISLRVLNLLKYAPTTKYTDLNMAFTAKASNLSQNRYLSNPKLAPPNKNCPVCSKVCRGVIKLSSDCLNKMKLSDFVVLIREKYSYPQDISLLDASNQRLLFDYDFEDLNDRTLSEINLGNGSIILFSDEEGDTMIRKAIELFLDVDDELPCNTCSLPDVEVPLIKANNSPSKNEEEEKNEKGADVVATTNSHGKDGIVILDDDEGEITIDAEPINGSKKRPVDTEISEAPSNKRTKLVNEPTNSDIVELD.

Residues 28-33 (GAGGIG), aspartate 52, 60-63 (NLNR), lysine 76, and 121-126 (DNLAAR) each bind ATP. The Zn(2+) site is built by cysteine 162 and cysteine 165. Catalysis depends on cysteine 177, which acts as the Glycyl thioester intermediate. Zn(2+) is bound by residues cysteine 435 and cysteine 438. A disordered region spans residues 581–636 (DGIVILDDDEGEITIDAEPINGSKKRPVDTEISEAPSNKRTKLVNEPTNSDIVELD). A compositionally biased stretch (acidic residues) spans 586–595 (LDDDEGEITI). The Nuclear localization signal motif lies at 619–622 (KRTK). A compositionally biased stretch (polar residues) spans 626–636 (EPTNSDIVELD).

The protein belongs to the ubiquitin-activating E1 family. In terms of assembly, heterodimer of UBA2 and AOS1. The complex binds SMT3. In terms of processing, multiubiquitinated in vivo.

It is found in the nucleus. It functions in the pathway protein modification; protein sumoylation. The dimeric enzyme acts as a SMT3 E1 ligase. It mediates ATP-dependent activation of SMT3 and formation of a thioester with a conserved cysteine residue on AOS1. In Saccharomyces cerevisiae (strain ATCC 204508 / S288c) (Baker's yeast), this protein is Ubiquitin-activating enzyme E1-like (UBA2).